The following is a 340-amino-acid chain: Glycerol-3-phosphate dehydrogenase [NAD(P)+] (340 aa).

3 residues coordinate NADPH: Ser14, Trp15, and Lys109. Sn-glycerol 3-phosphate is bound by residues Lys109, Gly140, and Ser142. Residue Ala144 participates in NADPH binding. Sn-glycerol 3-phosphate-binding residues include Lys195, Asp248, Ser258, Arg259, and Asn260. Lys195 acts as the Proton acceptor in catalysis. Residue Arg259 participates in NADPH binding. Residues Val283 and Glu285 each contribute to the NADPH site.

This sequence belongs to the NAD-dependent glycerol-3-phosphate dehydrogenase family.

Its subcellular location is the cytoplasm. The enzyme catalyses sn-glycerol 3-phosphate + NAD(+) = dihydroxyacetone phosphate + NADH + H(+). It carries out the reaction sn-glycerol 3-phosphate + NADP(+) = dihydroxyacetone phosphate + NADPH + H(+). It participates in membrane lipid metabolism; glycerophospholipid metabolism. In terms of biological role, catalyzes the reduction of the glycolytic intermediate dihydroxyacetone phosphate (DHAP) to sn-glycerol 3-phosphate (G3P), the key precursor for phospholipid synthesis. The chain is Glycerol-3-phosphate dehydrogenase [NAD(P)+] from Syntrophobacter fumaroxidans (strain DSM 10017 / MPOB).